Reading from the N-terminus, the 310-residue chain is MTAPVLCIMGPTAVGKSELALSLAERLGGEIVSVDSAQIYRGLDIGTAKPSPAVRARCPHHLIDIRDPAERYSAAEFARDAQAAIAAIRSRGRLPVLVGGTGLYFQALQHGLSPMPAADAQVRAELEAEEAAYGVQALHRRLQAVDPESAARLHPNDSQRIQRALEVHRLTGRPLSQVQREPGQPGLTEMPLKIILEPPERAWLHRRIEARFRAMLAAGLVGEVVALHRRGDLSEELPAVRAVGYRQIWHYLEGACDYRTMIRRGLRATRQYAKRQITWLRGQTDGVRFTADDRLEAQVHSYVTGALGGV.

Residue 10–17 (GPTAVGKS) participates in ATP binding. 12 to 17 (TAVGKS) serves as a coordination point for substrate. Interaction with substrate tRNA regions lie at residues 35-38 (DSAQ), 159-163 (QRIQR), and 274-281 (KRQITWLR).

Belongs to the IPP transferase family. As to quaternary structure, monomer. Mg(2+) is required as a cofactor.

It carries out the reaction adenosine(37) in tRNA + dimethylallyl diphosphate = N(6)-dimethylallyladenosine(37) in tRNA + diphosphate. In terms of biological role, catalyzes the transfer of a dimethylallyl group onto the adenine at position 37 in tRNAs that read codons beginning with uridine, leading to the formation of N6-(dimethylallyl)adenosine (i(6)A). The sequence is that of tRNA dimethylallyltransferase from Halorhodospira halophila (strain DSM 244 / SL1) (Ectothiorhodospira halophila (strain DSM 244 / SL1)).